A 278-amino-acid chain; its full sequence is HTH-type transcriptional activator RhaS (278 aa).

The HTH araC/xylS-type domain occupies 174–272 (NLLLAWLEDH…NWSPRDIRQG (99 aa)). 2 consecutive DNA-binding regions (H-T-H motif) follow at residues 191-212 (DAVADQFSLSLRTLHRQLKQQT) and 239-262 (VTDIAYRCGFSDSNHFSTLFRREF).

In terms of assembly, binds DNA as a dimer.

The protein localises to the cytoplasm. Activates expression of the rhaBAD and rhaT operons. The protein is HTH-type transcriptional activator RhaS of Escherichia coli O81 (strain ED1a).